The sequence spans 409 residues: Toluene 1,2-dioxygenase system ferredoxin--NAD(+) reductase component (409 aa).

4-35 (HVAIIGNGVGGFTTAQALRAEGFEGRISLIGD) provides a ligand contact to FAD. Position 145–173 (145–173 (RLLIVGGGLIGCEVATTARKLGLSVTILE)) interacts with NAD(+).

It belongs to the bacterial ring-hydroxylating dioxygenase ferredoxin reductase family. As to quaternary structure, this dioxygenase system consists of four proteins: the two subunits of the hydroxylase component (todC1 and todC2), a ferredoxin (TodB) and a ferredoxin reductase (TodA). It depends on FAD as a cofactor.

The catalysed reaction is 2 reduced [2Fe-2S]-[ferredoxin] + NAD(+) + H(+) = 2 oxidized [2Fe-2S]-[ferredoxin] + NADH. It functions in the pathway xenobiotic degradation; toluene degradation. Its function is as follows. Part of the electron transfer component of toluene 1,2-dioxygenase, transfers electrons from ferredoxin (TodB) to NADH. The polypeptide is Toluene 1,2-dioxygenase system ferredoxin--NAD(+) reductase component (todA) (Pseudomonas putida (Arthrobacter siderocapsulatus)).